A 256-amino-acid polypeptide reads, in one-letter code: Alcohol dehydrogenase (256 aa).

12-41 lines the NAD(+) pocket; sequence FVAGLGGIGLDTTKELLKRDLKNLVILDRI. Ser-140 lines the substrate pocket. The active-site Proton acceptor is Tyr-153.

This sequence belongs to the short-chain dehydrogenases/reductases (SDR) family. In terms of assembly, homodimer.

The enzyme catalyses a primary alcohol + NAD(+) = an aldehyde + NADH + H(+). The catalysed reaction is a secondary alcohol + NAD(+) = a ketone + NADH + H(+). In Drosophila ananassae (Fruit fly), this protein is Alcohol dehydrogenase.